The primary structure comprises 418 residues: N-acetylglucosamine-6-phosphate deacetylase (418 aa).

Glu154 contacts a divalent metal cation. Position 165-166 (165-166) interacts with substrate; it reads CH. 2 residues coordinate a divalent metal cation: His223 and His244. Substrate-binding positions include 247 to 248, Arg255, and 281 to 284; these read NA and DGIH. Residue Asp306 is the Proton donor/acceptor of the active site. Residue 340-342 participates in substrate binding; that stretch reads TAG.

The protein belongs to the metallo-dependent hydrolases superfamily. NagA family. A divalent metal cation is required as a cofactor.

The enzyme catalyses N-acetyl-D-glucosamine 6-phosphate + H2O = D-glucosamine 6-phosphate + acetate. In Caenorhabditis elegans, this protein is N-acetylglucosamine-6-phosphate deacetylase.